A 756-amino-acid polypeptide reads, in one-letter code: Inhibitor of nuclear factor kappa-B kinase subunit beta (756 aa).

Residues 15 to 300 (WEMKERLGTG…DPVYGPNGCF (286 aa)) enclose the Protein kinase domain. Residues 21-29 (LGTGGFGNV) and K44 contribute to the ATP site. Catalysis depends on D145, which acts as the Proton acceptor. Residue K163 forms a Glycyl lysine isopeptide (Lys-Gly) (interchain with G-Cter in ubiquitin) linkage. S177 bears the Phosphoserine; by TBK1 and PKC/PRKCZ mark. The residue at position 179 (C179) is an S-nitrosocysteine. Residue S181 is modified to Phosphoserine; by TBK1, PKC/PRKCZ and PDPK1. The residue at position 191 (P191) is a Hydroxyproline. The interval 458 to 479 (LLRNNSCLSKMKNSMASMSQQL) is leucine-zipper. Residues S670, S672, S675, S682, S689, S697, S705, S733, and S740 each carry the phosphoserine; by autocatalysis modification. The tract at residues 737-742 (LDWSWL) is NEMO-binding.

This sequence belongs to the protein kinase superfamily. Ser/Thr protein kinase family. I-kappa-B kinase subfamily. In terms of assembly, component of the I-kappa-B-kinase (IKK) core complex consisting of CHUK, IKBKB and IKBKG; probably four alpha/CHUK-beta/IKBKB dimers are associated with four gamma/IKBKG subunits. The IKK core complex seems to associate with regulatory or adapter proteins to form a IKK-signalosome holo-complex. The IKK complex associates with TERF2IP/RAP1, leading to promote IKK-mediated phosphorylation of RELA/p65. Part of a complex composed of NCOA2, NCOA3, CHUK/IKKA, IKBKB, IKBKG and CREBBP. Part of a 70-90 kDa complex at least consisting of CHUK/IKKA, IKBKB, NFKBIA, RELA, ELP1 and MAP3K14. Found in a membrane raft complex, at least composed of BCL10, CARD11, DPP4 and IKBKB. Interacts with SQSTM1 through PRKCZ or PRKCI. Forms an NGF-induced complex with IKBKB, PRKCI and TRAF6. May interact with MAVS/IPS1. Interacts with NALP2. Interacts with TICAM1. Interacts with FAF1; the interaction disrupts the IKK complex formation. Interacts with ATM. Part of a ternary complex consisting of TANK, IKBKB and IKBKG. Interacts with NIBP; the interaction is direct. Interacts with ARRB1 and ARRB2. Interacts with TRIM21. Interacts with NLRC5; prevents IKBKB phosphorylation and kinase activity. Interacts with PDPK1. Interacts with EIF2AK2/PKR. The phosphorylated form interacts with PPM1A and PPM1B. Interacts with ZNF268; the interaction is further increased in a TNF-alpha-dependent manner. Interacts with IKBKE. Interacts with ZC3H12A. Interacts with AKAP13. Interacts with IFIT5; the interaction synergizes the recruitment of IKK to MAP3K7 and enhances IKK phosphorylation. Interacts with LRRC14; disrupts IKBKB-IKBKG interaction preventing I-kappa-B-kinase (IKK) core complex formation and leading to a decrease of IKBKB phosphorylation and NF-kappaB activation. Interacts with SASH1. Interacts with ARFIP2. Interacts with FKBP5. Upon cytokine stimulation, phosphorylated on Ser-177 and Ser-181 by MEKK1 and/or MAP3K14/NIK as well as TBK1 and PRKCZ; which enhances activity. Phosphorylated by MAP3K7/TAK1 in response to NOD1 and NOD2 signaling, promoting activation and phosphorylation of NF-kappa-B inhibitors, leading to NF-kappa-B activation. Once activated, autophosphorylates on the C-terminal serine cluster; which decreases activity and prevents prolonged activation of the inflammatory response. Phosphorylated by the IKK-related kinases TBK1 and IKBKE, which is associated with reduced CHUK/IKKA and IKBKB activity and NF-kappa-B-dependent gene transcription. Dephosphorylated at Ser-177 and Ser-181 by PPM1A and PPM1B. Post-translationally, ubiquitinated. Monoubiquitination involves TRIM21 that leads to inhibition of Tax-induced NF-kappa-B signaling. 'Ser-163' may not serve as a monoubiquitination site. Ubiquitination on 'Ser-163' may modulate phosphorylation on C-terminal serine residues. In terms of processing, hydroxylated by PHD1/EGLN2, loss of hydroxylation under hypoxic conditions results in activation of NF-kappa-B.

It localises to the cytoplasm. Its subcellular location is the nucleus. The protein localises to the membrane raft. It catalyses the reaction L-seryl-[I-kappa-B protein] + ATP = O-phospho-L-seryl-[I-kappa-B protein] + ADP + H(+). The catalysed reaction is L-seryl-[protein] + ATP = O-phospho-L-seryl-[protein] + ADP + H(+). The enzyme catalyses L-threonyl-[protein] + ATP = O-phospho-L-threonyl-[protein] + ADP + H(+). Its function is as follows. Serine kinase that plays an essential role in the NF-kappa-B signaling pathway which is activated by multiple stimuli such as inflammatory cytokines, bacterial or viral products, DNA damages or other cellular stresses. Acts as a part of the canonical IKK complex in the conventional pathway of NF-kappa-B activation. Phosphorylates inhibitors of NF-kappa-B on 2 critical serine residues. These modifications allow polyubiquitination of the inhibitors and subsequent degradation by the proteasome. In turn, free NF-kappa-B is translocated into the nucleus and activates the transcription of hundreds of genes involved in immune response, growth control, or protection against apoptosis. In addition to the NF-kappa-B inhibitors, phosphorylates several other components of the signaling pathway including NEMO/IKBKG, NF-kappa-B subunits RELA and NFKB1, as well as IKK-related kinases TBK1 and IKBKE. IKK-related kinase phosphorylations may prevent the overproduction of inflammatory mediators since they exert a negative regulation on canonical IKKs. Phosphorylates FOXO3, mediating the TNF-dependent inactivation of this pro-apoptotic transcription factor. Also phosphorylates other substrates including NAA10, NCOA3, BCL10 and IRS1. Phosphorylates RIPK1 at 'Ser-25' which represses its kinase activity and consequently prevents TNF-mediated RIPK1-dependent cell death. Phosphorylates the C-terminus of IRF5, stimulating IRF5 homodimerization and translocation into the nucleus. This Bos taurus (Bovine) protein is Inhibitor of nuclear factor kappa-B kinase subunit beta (IKBKB).